The sequence spans 153 residues: uncharacterized protein (153 aa).

The N-terminal stretch at 1–22 (MKAFNKLFSLVVASVLVFSLAG) is a signal peptide. Cys23 carries N-palmitoyl cysteine lipidation. Cys23 is lipidated: S-diacylglycerol cysteine.

The protein to L.monocytogenes lmo0207.

The protein resides in the cell membrane. This is an uncharacterized protein from Escherichia coli (strain K12).